We begin with the raw amino-acid sequence, 247 residues long: Carboxy-S-adenosyl-L-methionine synthase (247 aa).

Residues Tyr-39, 64–66, 89–90, 117–118, Asn-132, and Arg-199 each bind S-adenosyl-L-methionine; these read GCS, DN, and DI.

The protein belongs to the class I-like SAM-binding methyltransferase superfamily. Cx-SAM synthase family. In terms of assembly, homodimer.

It catalyses the reaction prephenate + S-adenosyl-L-methionine = carboxy-S-adenosyl-L-methionine + 3-phenylpyruvate + H2O. Its function is as follows. Catalyzes the conversion of S-adenosyl-L-methionine (SAM) to carboxy-S-adenosyl-L-methionine (Cx-SAM). The protein is Carboxy-S-adenosyl-L-methionine synthase of Escherichia fergusonii (strain ATCC 35469 / DSM 13698 / CCUG 18766 / IAM 14443 / JCM 21226 / LMG 7866 / NBRC 102419 / NCTC 12128 / CDC 0568-73).